A 98-amino-acid chain; its full sequence is Small ribosomal subunit protein uS17 (98 aa).

Belongs to the universal ribosomal protein uS17 family. As to quaternary structure, part of the 30S ribosomal subunit.

Functionally, one of the primary rRNA binding proteins, it binds specifically to the 5'-end of 16S ribosomal RNA. The protein is Small ribosomal subunit protein uS17 of Mesomycoplasma hyopneumoniae (strain 232) (Mycoplasma hyopneumoniae).